The chain runs to 132 residues: Large ribosomal subunit protein uL22c (132 aa).

It belongs to the universal ribosomal protein uL22 family. Part of the 50S ribosomal subunit.

Its subcellular location is the plastid. It is found in the chloroplast. In terms of biological role, this protein binds specifically to 23S rRNA. Its function is as follows. The globular domain of the protein is located near the polypeptide exit tunnel on the outside of the subunit, while an extended beta-hairpin is found that lines the wall of the exit tunnel in the center of the 70S ribosome. The polypeptide is Large ribosomal subunit protein uL22c (rpl22) (Populus alba (White poplar)).